A 311-amino-acid polypeptide reads, in one-letter code: Malate dehydrogenase (311 aa).

Residues 7–13 (GAAGGIG) and Asp-34 each bind NAD(+). Arg-81 and Arg-87 together coordinate substrate. NAD(+) is bound by residues Asn-94 and 117 to 119 (ITN). Substrate is bound by residues Asn-119 and Arg-153. The active-site Proton acceptor is His-177. Position 227 (Met-227) interacts with NAD(+).

Belongs to the LDH/MDH superfamily. MDH type 1 family. Homodimer.

It carries out the reaction (S)-malate + NAD(+) = oxaloacetate + NADH + H(+). Catalyzes the reversible oxidation of malate to oxaloacetate. The polypeptide is Malate dehydrogenase (mdh) (Vibrio cholerae serotype O1 (strain ATCC 39315 / El Tor Inaba N16961)).